The sequence spans 63 residues: Cecropin-C (63 aa).

The first 23 residues, 1–23, serve as a signal peptide directing secretion; sequence MNFNKIFVFVALILAISLGQSEA. Arginine amide is present on Arg62.

It belongs to the cecropin family.

It localises to the secreted. In terms of biological role, cecropins have lytic and antibacterial activity against several Gram-positive and Gram-negative bacteria. This is Cecropin-C (CecC) from Drosophila orena (Fruit fly).